The sequence spans 50 residues: MSKRKMGPKQQKNPELPKSPEQPYGEPLSGSKKEKKANHSGQKHNPHHGL.

Positions 1–50 (MSKRKMGPKQQKNPELPKSPEQPYGEPLSGSKKEKKANHSGQKHNPHHGL) are disordered. The segment covering 33–50 (KEKKANHSGQKHNPHHGL) has biased composition (basic residues).

It belongs to the SspP family.

Its subcellular location is the spore core. The chain is Small, acid-soluble spore protein P from Oceanobacillus iheyensis (strain DSM 14371 / CIP 107618 / JCM 11309 / KCTC 3954 / HTE831).